A 528-amino-acid chain; its full sequence is D-3-phosphoglycerate dehydrogenase (528 aa).

Residues 151–152 (RI), Asp-171, 230–232 (AAR), and Asp-256 each bind NAD(+). Arg-232 is an active-site residue. Glu-261 is a catalytic residue. The active-site Proton donor is His-279. NAD(+) is bound at residue 279–282 (HLGA). The ACT domain maps to 455–527 (NLIIHYVDRP…DAYKLEVVDL (73 aa)).

Belongs to the D-isomer specific 2-hydroxyacid dehydrogenase family.

It catalyses the reaction (2R)-3-phosphoglycerate + NAD(+) = 3-phosphooxypyruvate + NADH + H(+). It carries out the reaction (R)-2-hydroxyglutarate + NAD(+) = 2-oxoglutarate + NADH + H(+). The protein operates within amino-acid biosynthesis; L-serine biosynthesis; L-serine from 3-phospho-D-glycerate: step 1/3. Functionally, catalyzes the reversible oxidation of 3-phospho-D-glycerate to 3-phosphonooxypyruvate, the first step of the phosphorylated L-serine biosynthesis pathway. Also catalyzes the reversible oxidation of 2-hydroxyglutarate to 2-oxoglutarate. In Mycobacterium bovis (strain ATCC BAA-935 / AF2122/97), this protein is D-3-phosphoglycerate dehydrogenase (serA).